The following is a 137-amino-acid chain: Phospholipase A2 group V (137 aa).

The first 20 residues, 1–20 (MKGLLTLAWFLACSVPAVPG), serve as a signal peptide directing secretion. 6 disulfides stabilise this stretch: Cys46-Cys137, Cys48-Cys64, Cys63-Cys117, Cys70-Cys110, Cys79-Cys103, and Cys97-Cys108. Tyr47, Gly49, and Gly51 together coordinate Ca(2+). His67 is an active-site residue. Residue Asp68 participates in Ca(2+) binding. Residue Asp111 is part of the active site.

This sequence belongs to the phospholipase A2 family. Ca(2+) is required as a cofactor. Post-translationally, this enzyme lacks one of the seven disulfide bonds found in similar PA2 proteins. As to expression, expressed in peritoneal macrophages (at protein level). Expressed in heart, skeletal muscle and white adipose tissue.

Its subcellular location is the secreted. The protein localises to the cell membrane. It localises to the cytoplasmic vesicle. The protein resides in the phagosome. It is found in the recycling endosome. Its subcellular location is the golgi apparatus. The protein localises to the cis-Golgi network. It localises to the trans-Golgi network. The catalysed reaction is a 1,2-diacyl-sn-glycero-3-phosphocholine + H2O = a 1-acyl-sn-glycero-3-phosphocholine + a fatty acid + H(+). It carries out the reaction 1-hexadecanoyl-2-(9Z-octadecenoyl)-sn-glycero-3-phosphocholine + H2O = 1-hexadecanoyl-sn-glycero-3-phosphocholine + (9Z)-octadecenoate + H(+). The enzyme catalyses 1-hexadecanoyl-2-(5Z,8Z,11Z,14Z-eicosatetraenoyl)-sn-glycero-3-phosphocholine + H2O = 1-hexadecanoyl-sn-glycero-3-phosphocholine + (5Z,8Z,11Z,14Z)-eicosatetraenoate + H(+). It catalyses the reaction 1-hexadecanoyl-2-(9Z,12Z-octadecadienoyl)-sn-glycero-3-phosphoethanolamine + H2O = 1-hexadecanoyl-sn-glycero-3-phosphoethanolamine + (9Z,12Z)-octadecadienoate + H(+). The catalysed reaction is 1-hexadecanoyl-2-(5Z,8Z,11Z,14Z-eicosatetraenoyl)-sn-glycero-3-phosphoethanolamine + H2O = 1-hexadecanoyl-sn-glycero-3-phosphoethanolamine + (5Z,8Z,11Z,14Z)-eicosatetraenoate + H(+). It carries out the reaction 1-octadecanoyl-2-(5Z,8Z,11Z,14Z-eicosatetraenoyl)-sn-glycero-3-phospho-(1D-myo-inositol) + H2O = 1-octadecanoyl-sn-glycero-3-phospho-(1D-myo-inositol) + (5Z,8Z,11Z,14Z)-eicosatetraenoate + H(+). The enzyme catalyses 1-hexadecanoyl-2-(9Z-octadecenoyl)-sn-glycero-3-phosphoglycerol + H2O = 1-hexadecanoyl-sn-glycero-3-phosphoglycerol + (9Z)-octadecenoate + H(+). It catalyses the reaction N-hexadecanoyl-1,2-di-(9Z-octadecenoyl)-sn-glycero-3-phosphoethanolamine + H2O = N-hexadecanoyl-1-(9Z-octadecenoyl)-sn-glycero-3-phosphoethanolamine + (9Z)-octadecenoate + H(+). The catalysed reaction is 1'-[1,2-di-(9Z-octadecenoyl)-sn-glycero-3-phospho]-3'-[1-(9Z-octadecenoyl)-sn-glycero-3-phospho]-glycerol + H2O = 1',3'-bis-[1-(9Z-octadecenoyl)-sn-glycero-3-phospho]-glycerol + (9Z)-octadecenoate + H(+). It carries out the reaction 1',3'-bis[1,2-di-(9Z-octadecenoyl)-sn-glycero-3-phospho]-glycerol + H2O = 1'-[1,2-di-(9Z-octadecenoyl)-sn-glycero-3-phospho]-3'-[1-(9Z-octadecenoyl)-sn-glycero-3-phospho]-glycerol + (9Z)-octadecenoate + H(+). It participates in lipid metabolism; phospholipid metabolism. It functions in the pathway lipid metabolism; leukotriene B4 biosynthesis. Its pathway is lipid metabolism; leukotriene C4 biosynthesis. In terms of biological role, secretory calcium-dependent phospholipase A2 that primarily targets extracellular phospholipids. Hydrolyzes the ester bond of the fatty acyl group attached at sn-2 position of phospholipids (phospholipase A2 activity), preferentially releasing fatty acyl groups with a low degree of unsaturation such as oleoyl (C18:1) and linoleoyl (C18:2) groups. Hydrolyzes low-density lipoprotein (LDL) phospholipids releasing unsaturated fatty acids that drive macrophage polarization toward an M2 phenotype. May act in an autocrine and paracrine manner. Contributes to lipid remodeling of cellular membranes at different subcellular locations and generation of lipid mediators involved in pathogen clearance. Cleaves sn-2 fatty acyl chains of cardiolipin, a major component of the inner membrane of mitochondria and bacterial membranes. Promotes phagocytosis of bacteria in macrophages through production of lysophosphatidylethanolamines. Displays bactericidal activity against Gram-positive bacteria by directly hydrolyzing the phospholipids of the bacterial membrane. Promotes phagocytosis and killing of ingested fungi likely through controlling phagosome-lysosome fusion and phagosome maturation. Plays a role in biosynthesis of cysteinyl leukotrienes (CysLTs) in myeloid cells. In eosinophils, triggers perinuclear arachidonate release and LTC4 synthesis in a PLA2G4A-independent way. In neutrophils, amplifies CysLTs biosynthesis initiated by PLA2G4A. Promotes immune complex clearance in macrophages via stimulating synthesis of CysLTs, which act through CYSLTR1 to trigger phagocytosis. May regulate antigen processing in antigen-presenting cells. In pulmonary macrophages regulates IL33 production required for activation of group 2 innate lymphoid cells. May play a role in the biosynthesis of N-acyl ethanolamines that regulate energy metabolism. Hydrolyzes N-acyl phosphatidylethanolamines to N-acyl lysophosphatidylethanolamines, which are further cleaved by a lysophospholipase D to release N-acyl ethanolamines. The sequence is that of Phospholipase A2 group V (Pla2g5) from Mus musculus (Mouse).